A 566-amino-acid chain; its full sequence is MDADRLAELQLTRAEMRRIGEALQDRRFRELLTEYVEEISSPENRRRYEEEIRRLEEERGAAVQFIHPTPHHVLKGRGPSGKCFINICSDQLIEKPRSEAATDDRGRSGHSWRIPYSLTPGRAGRDAAGAPCVLFDAVFHPDALLMAENNARFMTLIHRTATGGIQDNFRIRLEHVTRLKMMKYKGEPQPTMIRRPNPGQTEAADRGPQQTTGPQQPTGPQQPTDPQQPTDTQQPTDPQQTTGPQQTTGPQQTTGPHQPTDPQQTTGPQQPTDPQQPTGPHQPTDPQQTTDPPPTAPQYRLKYRSVLDLQDYRCCRDSGSAGRPTAIIIEVEVPRLRSAQEAELRVEERRLLLEAPTAEYRLELPLAYPVEEERAEAQFNHTHRLLTVTLPVLKRRRVEEEERRAEEEESRKGGDEDGELHPDCGPDPPMMELQTEDTHTPAADTHTPAADTHTPAADTHTPAAETGAGLGSGVALLSSSNVISVCGADVHQQLEEPGDPSAHTDPADTHPADTDPADTDPAHTDPADTDPADTDPAHTDPAHTDPEMESRIAGLHLQNTLCFQLD.

Disordered regions lie at residues 183–298 (KYKG…TAPQ), 399–467 (EEEE…AETG), and 493–552 (QLEE…ESRI). Positions 208–290 (PQQTTGPQQP…HQPTDPQQTT (83 aa)) are enriched in low complexity. Basic and acidic residues predominate over residues 399–424 (EEEERRAEEEESRKGGDEDGELHPDC). A compositionally biased stretch (low complexity) spans 440-467 (TPAADTHTPAADTHTPAADTHTPAAETG). The span at 535-550 (DPAHTDPAHTDPEMES) shows a compositional bias: basic and acidic residues.

This sequence belongs to the PIH1 family. Kintoun subfamily.

Its subcellular location is the cytoplasm. It localises to the dynein axonemal particle. Functionally, required for cytoplasmic pre-assembly of axonemal dyneins, thereby playing a central role in motility in cilia and flagella. Involved in pre-assembly of dynein arm complexes in the cytoplasm before intraflagellar transport loads them for the ciliary compartment. The sequence is that of Protein kintoun from Danio rerio (Zebrafish).